Here is a 127-residue protein sequence, read N- to C-terminus: MARIAGVDLPREKRIEVALQYIYGIGKTTAQAICHRANVDVTTRTKDLTDDEVRRIRETIEQAVKVEGDLRREISLNIKRLMDLGCYRGLRHRKGLPVRGQRTHTNARTRKGPKKGLVRKAAAPAPK.

A compositionally biased stretch (basic residues) spans 95-118 (GLPVRGQRTHTNARTRKGPKKGLV). The disordered stretch occupies residues 95–127 (GLPVRGQRTHTNARTRKGPKKGLVRKAAAPAPK).

This sequence belongs to the universal ribosomal protein uS13 family. As to quaternary structure, part of the 30S ribosomal subunit. Forms a loose heterodimer with protein S19. Forms two bridges to the 50S subunit in the 70S ribosome.

In terms of biological role, located at the top of the head of the 30S subunit, it contacts several helices of the 16S rRNA. In the 70S ribosome it contacts the 23S rRNA (bridge B1a) and protein L5 of the 50S subunit (bridge B1b), connecting the 2 subunits; these bridges are implicated in subunit movement. Contacts the tRNAs in the A and P-sites. This is Small ribosomal subunit protein uS13 from Anaeromyxobacter sp. (strain Fw109-5).